A 326-amino-acid chain; its full sequence is Putative replication protein B (326 aa).

This sequence belongs to the ParB family.

This is Putative replication protein B from Sinorhizobium fredii (strain NBRC 101917 / NGR234).